The sequence spans 122 residues: Ribosome-binding factor A (122 aa).

It belongs to the RbfA family. Monomer. Binds 30S ribosomal subunits, but not 50S ribosomal subunits or 70S ribosomes.

The protein resides in the cytoplasm. Its function is as follows. One of several proteins that assist in the late maturation steps of the functional core of the 30S ribosomal subunit. Associates with free 30S ribosomal subunits (but not with 30S subunits that are part of 70S ribosomes or polysomes). Required for efficient processing of 16S rRNA. May interact with the 5'-terminal helix region of 16S rRNA. This is Ribosome-binding factor A from Polaromonas naphthalenivorans (strain CJ2).